A 207-amino-acid chain; its full sequence is Ribosomal RNA small subunit methyltransferase G (207 aa).

S-adenosyl-L-methionine is bound by residues G73, L78, 124-125, and R139; that span reads VE.

Belongs to the methyltransferase superfamily. RNA methyltransferase RsmG family.

The protein localises to the cytoplasm. The catalysed reaction is guanosine(527) in 16S rRNA + S-adenosyl-L-methionine = N(7)-methylguanosine(527) in 16S rRNA + S-adenosyl-L-homocysteine. Specifically methylates the N7 position of guanine in position 527 of 16S rRNA. The polypeptide is Ribosomal RNA small subunit methyltransferase G (Escherichia fergusonii (strain ATCC 35469 / DSM 13698 / CCUG 18766 / IAM 14443 / JCM 21226 / LMG 7866 / NBRC 102419 / NCTC 12128 / CDC 0568-73)).